Reading from the N-terminus, the 432-residue chain is Adenylosuccinate synthetase (432 aa).

Residues 13–19 (GDEGKGK) and 41–43 (GHT) each bind GTP. Asp14 serves as the catalytic Proton acceptor. 2 residues coordinate Mg(2+): Asp14 and Gly41. Residues 14–17 (DEGK), 39–42 (NAGH), Thr130, Arg144, Gln225, Thr240, and Arg304 contribute to the IMP site. The active-site Proton donor is the His42. Residue 300-306 (STTGRPR) coordinates substrate. GTP is bound by residues Arg306, 332–334 (KLD), and 416–418 (STG).

Belongs to the adenylosuccinate synthetase family. Homodimer. Mg(2+) serves as cofactor.

The protein resides in the cytoplasm. It catalyses the reaction IMP + L-aspartate + GTP = N(6)-(1,2-dicarboxyethyl)-AMP + GDP + phosphate + 2 H(+). It participates in purine metabolism; AMP biosynthesis via de novo pathway; AMP from IMP: step 1/2. Functionally, plays an important role in the de novo pathway of purine nucleotide biosynthesis. Catalyzes the first committed step in the biosynthesis of AMP from IMP. This chain is Adenylosuccinate synthetase, found in Nitrosomonas europaea (strain ATCC 19718 / CIP 103999 / KCTC 2705 / NBRC 14298).